The chain runs to 184 residues: Protein GrpE (184 aa).

Over residues 1–14 (MANEQNEQSQDLSS) the composition is skewed to polar residues. Positions 1 to 35 (MANEQNEQSQDLSSEQTTQDHEQTQTEGVEQGAEI) are disordered.

It belongs to the GrpE family. As to quaternary structure, homodimer.

Its subcellular location is the cytoplasm. Participates actively in the response to hyperosmotic and heat shock by preventing the aggregation of stress-denatured proteins, in association with DnaK and GrpE. It is the nucleotide exchange factor for DnaK and may function as a thermosensor. Unfolded proteins bind initially to DnaJ; upon interaction with the DnaJ-bound protein, DnaK hydrolyzes its bound ATP, resulting in the formation of a stable complex. GrpE releases ADP from DnaK; ATP binding to DnaK triggers the release of the substrate protein, thus completing the reaction cycle. Several rounds of ATP-dependent interactions between DnaJ, DnaK and GrpE are required for fully efficient folding. This Acinetobacter baylyi (strain ATCC 33305 / BD413 / ADP1) protein is Protein GrpE.